Consider the following 253-residue polypeptide: Indole-3-glycerol phosphate synthase (253 aa).

This sequence belongs to the TrpC family.

The catalysed reaction is 1-(2-carboxyphenylamino)-1-deoxy-D-ribulose 5-phosphate + H(+) = (1S,2R)-1-C-(indol-3-yl)glycerol 3-phosphate + CO2 + H2O. Its pathway is amino-acid biosynthesis; L-tryptophan biosynthesis; L-tryptophan from chorismate: step 4/5. The sequence is that of Indole-3-glycerol phosphate synthase from Petrotoga mobilis (strain DSM 10674 / SJ95).